Reading from the N-terminus, the 214-residue chain is Pyridoxine/pyridoxamine 5'-phosphate oxidase (214 aa).

Substrate-binding positions include 8–11 (RINY) and lysine 66. FMN contacts are provided by residues 61–66 (RIVLIK), 76–77 (FT), arginine 82, lysine 83, and glutamine 105. Positions 123, 127, and 131 each coordinate substrate. FMN-binding positions include 140–141 (QS) and tryptophan 184. 190–192 (RLH) contacts substrate. Arginine 194 is a binding site for FMN.

The protein belongs to the pyridoxamine 5'-phosphate oxidase family. Homodimer. Requires FMN as cofactor.

It catalyses the reaction pyridoxamine 5'-phosphate + O2 + H2O = pyridoxal 5'-phosphate + H2O2 + NH4(+). The catalysed reaction is pyridoxine 5'-phosphate + O2 = pyridoxal 5'-phosphate + H2O2. The protein operates within cofactor metabolism; pyridoxal 5'-phosphate salvage; pyridoxal 5'-phosphate from pyridoxamine 5'-phosphate: step 1/1. It participates in cofactor metabolism; pyridoxal 5'-phosphate salvage; pyridoxal 5'-phosphate from pyridoxine 5'-phosphate: step 1/1. Its function is as follows. Catalyzes the oxidation of either pyridoxine 5'-phosphate (PNP) or pyridoxamine 5'-phosphate (PMP) into pyridoxal 5'-phosphate (PLP). This chain is Pyridoxine/pyridoxamine 5'-phosphate oxidase, found in Burkholderia lata (strain ATCC 17760 / DSM 23089 / LMG 22485 / NCIMB 9086 / R18194 / 383).